Here is a 182-residue protein sequence, read N- to C-terminus: Probable tyrosine phosphatase protein H4 (182 aa).

The Tyrosine-protein phosphatase domain occupies 1–182 (MEINKFICSQ…TVLKIQKSKI (182 aa)). The active-site Phosphocysteine intermediate is C142.

This sequence belongs to the protein-tyrosine phosphatase family.

The enzyme catalyses O-phospho-L-tyrosyl-[protein] + H2O = L-tyrosyl-[protein] + phosphate. In Microplitis demolitor (Parasitoid wasp), this protein is Probable tyrosine phosphatase protein H4 (H5).